Here is an 89-residue protein sequence, read N- to C-terminus: Cell division protein ZapA (89 aa).

The protein belongs to the ZapA family. Type 2 subfamily. Homodimer. Interacts with FtsZ.

The protein localises to the cytoplasm. Activator of cell division through the inhibition of FtsZ GTPase activity, therefore promoting FtsZ assembly into bundles of protofilaments necessary for the formation of the division Z ring. It is recruited early at mid-cell but it is not essential for cell division. The polypeptide is Cell division protein ZapA (Bacillus mycoides (strain KBAB4) (Bacillus weihenstephanensis)).